The following is a 762-amino-acid chain: MLKLTALVALLLGAASATPTPSPPASDEGITKRATSFYYPNMDHVNAPRGFAPDLDGDFNYPIYQTVNAGDGNALQNAITTDGKGGSRHPQWFASQPRVVYIPPGTYTISKTLRFNTDTILMGDPTNPPIIKAAAGFSGDQTLISAQDPSTNEKGELSFAVAIKNVVLDTTAIPGGNSFTALWWGVAQAAHLQNVRITMSSSSGGNGHTGIRMGRGSTLGLADVRVERGQNGIWIDGHQQASFHNIYFFQNTIGMLISSGNTFSIFSSTFDTCGTAFPTLAGSPWIALIDAKSINSGVTFTTNQFPSFMIENLTKDNGTPVVVVRGSTLVGASSHVNTYSYGNTVGRNPTYGDVTSSNTRPSALAPGGRYPYVAPPTYGDLPISSFLNVKDPAQNGNRQVKGDNTINEADTLNAILELAASQNKVAYFPFGKYRVDSTLFIPKGSRIVGEAWATITGNGNFFKNENSPQPVVSVGRAGDVGIAQLQDLRVTTNDVLPGAILVQFNMAGNNPGDVALWNSLVTVGGTRGAQALANACTNNSNECKGAFIGIHVAKGSSPYIQNVWELGLRDHIAENFSGGTSHRRERWNFGPIRRNATCLYPIGSGHWWLYQLNLHNAANVVVSLLQAETNYHQGANTQQIPPAPWVANVGTWGDPDFSWCNGGDKRCRMGPANFINGGSNIYTYASAAWAFFSGPGQGCAQFECQQTIHWIASTPSNLQAFGLCSKDSVNTLRLGDGTFINTQNGYTGGWTPGGGDVARYTT.

An N-terminal signal peptide occupies residues methionine 1–serine 16. The propeptide occupies alanine 17–arginine 33.

The protein belongs to the glycosyl hydrolase 55 family. Post-translationally, does not seem to be glycosylated.

The protein resides in the secreted. The enzyme catalyses Hydrolysis of (1-&gt;3)-beta-D-glucosidic linkages in (1-&gt;3)-beta-D-glucans.. Its activity is regulated as follows. Inhibited by glucose. Its function is as follows. Involved in mycoparasitism, hydrolyzes yeast and fungal cell walls. Classified as a small-oligosaccharide-producing type based its the end products: glucose, laminaribiose or laminaritetraose. The sequence is that of Glucan endo-1,3-beta-glucosidase BGN13.1 (bgn13.1) from Trichoderma harzianum (Hypocrea lixii).